Consider the following 153-residue polypeptide: SsrA-binding protein (153 aa).

The tract at residues 129-153 (KREDMKKKDQSREMAQALRERSKSH) is disordered.

It belongs to the SmpB family.

The protein resides in the cytoplasm. Its function is as follows. Required for rescue of stalled ribosomes mediated by trans-translation. Binds to transfer-messenger RNA (tmRNA), required for stable association of tmRNA with ribosomes. tmRNA and SmpB together mimic tRNA shape, replacing the anticodon stem-loop with SmpB. tmRNA is encoded by the ssrA gene; the 2 termini fold to resemble tRNA(Ala) and it encodes a 'tag peptide', a short internal open reading frame. During trans-translation Ala-aminoacylated tmRNA acts like a tRNA, entering the A-site of stalled ribosomes, displacing the stalled mRNA. The ribosome then switches to translate the ORF on the tmRNA; the nascent peptide is terminated with the 'tag peptide' encoded by the tmRNA and targeted for degradation. The ribosome is freed to recommence translation, which seems to be the essential function of trans-translation. This chain is SsrA-binding protein, found in Geobacter metallireducens (strain ATCC 53774 / DSM 7210 / GS-15).